A 137-amino-acid polypeptide reads, in one-letter code: MLMPKRTKFRKMHKGRNRGLANVGNKISFGEFGLKAMERGRMTSRQIEAARRVMTRKVKRGAKIWIRVFPDKPITNKPLEVRMGKGKGSVEYWVAQVQPGRVLYEMQGVDEVVAREAFELAAAKLPFKTQFVTRTVM.

The protein belongs to the universal ribosomal protein uL16 family. As to quaternary structure, part of the 50S ribosomal subunit.

Binds 23S rRNA and is also seen to make contacts with the A and possibly P site tRNAs. The chain is Large ribosomal subunit protein uL16 from Hydrogenovibrio crunogenus (strain DSM 25203 / XCL-2) (Thiomicrospira crunogena).